The primary structure comprises 420 residues: Zinc finger protein 362 (420 aa).

Disordered stretches follow at residues Met-1–Pro-28, Arg-54–Gln-80, and Val-115–Arg-155. Low complexity predominate over residues Ser-121–Ser-154. Thr-162 carries the phosphothreonine modification. The interval Thr-178–Pro-202 is disordered. A Glycyl lysine isopeptide (Lys-Gly) (interchain with G-Cter in SUMO2) cross-link involves residue Lys-198. 6 consecutive C2H2-type zinc fingers follow at residues Tyr-227–His-249, His-255–His-277, Tyr-283–His-305, Tyr-311–His-335, Tyr-341–His-363, and Tyr-371–His-393. Residue Ser-404 is modified to Phosphoserine.

The protein belongs to the krueppel C2H2-type zinc-finger protein family.

Its subcellular location is the nucleus. May be involved in transcriptional regulation. The protein is Zinc finger protein 362 (ZNF362) of Homo sapiens (Human).